The chain runs to 908 residues: MATIHVDGKEYEVNGADNLLEACLSLGLDIPYFCWHPALGSVGACRQCAVKQYQNAEDTRGRLVMSCMTPASDGTFISIDDEEAKQFRESVVEWLMTNHPHDCPVCEEGGNCHLQDMTVMTGHSFRRYRFTKRTHRNQDLGPFISHEMNRCIACYRCVRYYKDYADGTDLGVYGAHDNVYFGRPEDGTLESEFSGNLVEICPTGVFTDKTHSERYNRKWDMQFAPSICQQCSIGCNISPGERYGELRRIENRYNGTVNHYFLCDRGRFGYGYVNLKDRPRQPVQRRGDDFITLNAEQAMQGAADILRQSKKVIGIGSPRASVESNFALRELVGEENFYTGIAHGEQERLQLALKVLREGGIYTPALREIESYDAVLVLGEDVTQTGARVALAVRQAVKGKAREMAAAQKVADWQIAAILNIGQRAKHPLFVTNVDDTRLDDIAAWTYRAPVEDQARLGFAIAHALDNSAPAVDGIEPELQSKIDVIVQALAGAKKPLIISGTNAGSLEVIQAAANVAKALKGRGADVGITMIARSVNSMGLGIMGGGSLEEALTELETGRADAVVVLENDLHRHASATRVNAALAKAPLVMVVDHQRTAIMENAHLVLSAASFAESDGTVINNEGRAQRFFQVYDPAYYDSKTVMLESWRWLHSLHSTLLSREVDWTQLDHVIDAVVAKIPELAGIKDAAPDATFRIRGQKLAREPHRYSGRTAMRANISVHEPRQPQDIDTMFTFSMEGNNQPTAHRSQVPFAWAPGWNSPQAWNKFQDEVGGKLRFGDPGVRLFETSENGLDYFTSVPARFQPQDGKWRIAPYYHLFGSDELSQRAPVFQCRMPQPYIKLNPADAAKLGVNAGTRVSFSYDGNTVTLPVEIAEGLTAGQVGLPMGMSGIAPVLAGAHLEDLKEAQQ.

A 2Fe-2S ferredoxin-type domain is found at 2–83 (ATIHVDGKEY…GTFISIDDEE (82 aa)). [2Fe-2S] cluster-binding residues include Cys-34, Cys-45, Cys-48, and Cys-67. Positions 83–122 (EAKQFRESVVEWLMTNHPHDCPVCEEGGNCHLQDMTVMTG) constitute a 4Fe-4S His(Cys)3-ligated-type domain. 12 residues coordinate [4Fe-4S] cluster: His-99, Cys-103, Cys-106, Cys-112, Cys-151, Cys-154, Cys-157, Cys-201, Cys-228, Cys-231, Cys-235, and Cys-263. The region spanning 221–277 (MQFAPSICQQCSIGCNISPGERYGELRRIENRYNGTVNHYFLCDRGRFGYGYVNLKD) is the 4Fe-4S Mo/W bis-MGD-type domain.

It belongs to the complex I 75 kDa subunit family. Composed of 13 different subunits. Subunits NuoCD, E, F, and G constitute the peripheral sector of the complex. Requires [2Fe-2S] cluster as cofactor. [4Fe-4S] cluster is required as a cofactor.

It catalyses the reaction a quinone + NADH + 5 H(+)(in) = a quinol + NAD(+) + 4 H(+)(out). NDH-1 shuttles electrons from NADH, via FMN and iron-sulfur (Fe-S) centers, to quinones in the respiratory chain. The immediate electron acceptor for the enzyme in this species is believed to be ubiquinone. Couples the redox reaction to proton translocation (for every two electrons transferred, four hydrogen ions are translocated across the cytoplasmic membrane), and thus conserves the redox energy in a proton gradient. The sequence is that of NADH-quinone oxidoreductase subunit G (nuoG) from Escherichia coli O157:H7.